Consider the following 611-residue polypeptide: Chaperone protein DnaK (611 aa).

Threonine 173 carries the phosphothreonine; by autocatalysis modification. The span at 579–592 (AAGQAEGAQGAQDA) shows a compositional bias: low complexity. Residues 579 to 611 (AAGQAEGAQGAQDAGAKKDNVVDAEFEEVKEDK) are disordered. Residues 600 to 611 (VDAEFEEVKEDK) are compositionally biased toward acidic residues.

This sequence belongs to the heat shock protein 70 family.

Its function is as follows. Acts as a chaperone. The sequence is that of Chaperone protein DnaK from Bacillus mycoides (strain KBAB4) (Bacillus weihenstephanensis).